A 134-amino-acid polypeptide reads, in one-letter code: D-ribose pyranase (134 aa).

The active-site Proton donor is H20. Substrate is bound by residues D28, H101, and 123-125 (YCN).

It belongs to the RbsD / FucU family. RbsD subfamily. In terms of assembly, homodecamer.

Its subcellular location is the cytoplasm. It carries out the reaction beta-D-ribopyranose = beta-D-ribofuranose. It functions in the pathway carbohydrate metabolism; D-ribose degradation; D-ribose 5-phosphate from beta-D-ribopyranose: step 1/2. Functionally, catalyzes the interconversion of beta-pyran and beta-furan forms of D-ribose. This is D-ribose pyranase from Pseudomonas fluorescens (strain Pf0-1).